We begin with the raw amino-acid sequence, 121 residues long: Small ribosomal subunit protein uS13 (121 aa).

Residues 93 to 121 are disordered; the sequence is RKGLPVRGQKTKTNARTRKGKRKTVGAKS.

It belongs to the universal ribosomal protein uS13 family. In terms of assembly, part of the 30S ribosomal subunit. Forms a loose heterodimer with protein S19. Forms two bridges to the 50S subunit in the 70S ribosome.

Located at the top of the head of the 30S subunit, it contacts several helices of the 16S rRNA. In the 70S ribosome it contacts the 23S rRNA (bridge B1a) and protein L5 of the 50S subunit (bridge B1b), connecting the 2 subunits; these bridges are implicated in subunit movement. Contacts the tRNAs in the A and P-sites. The polypeptide is Small ribosomal subunit protein uS13 (Campylobacter lari (strain RM2100 / D67 / ATCC BAA-1060)).